A 189-amino-acid chain; its full sequence is Movement protein (189 aa).

This sequence belongs to the tombusvirus/aureusvirus movement protein p22 family. As to quaternary structure, interacts with host protein HFI22. In terms of processing, phosphorylated.

The protein resides in the host membrane. Its function is as follows. Transports viral genome to neighboring plant cells directly through plasmosdesmata, without any budding. The movement protein allows efficient cell to cell propagation, by bypassing the host cell wall barrier. The protein is Movement protein of Tomato bushy stunt virus (strain BS-3) (TBSV).